The primary structure comprises 286 residues: Phospholipase A1 (286 aa).

The signal sequence occupies residues 1 to 20 (MRISLACLAALCALPAGVMA). Residues 21–49 (QDASVHDKPAVRGSIIANLLQDHDNPFLL) lie on the Periplasmic side of the membrane. A beta stranded membrane pass occupies residues 50 to 62 (YPYESNYLLYTWT). Over 63–81 (SDLNKEAIRSYDWAENARK) the chain is Extracellular. Residues 82–96 (DEVKFQLSLAFPLWR) traverse the membrane as a beta stranded segment. Residues 97–102 (GILGDN) lie on the Periplasmic side of the membrane. Residues 103-115 (SLLGASYTQKSWW) form a beta stranded membrane-spanning segment. Over 116-125 (QLSNSKESAP) the chain is Extracellular. S123 provides a ligand contact to Ca(2+). A beta stranded membrane pass occupies residues 126-145 (FRETNYEPQLFLGFATDYQF). The Periplasmic segment spans residues 146-147 (AG). Residues 148–161 (WTLRDIEMGYNHDS) form a beta stranded membrane-spanning segment. H159 serves as the catalytic Proton acceptor. The active-site Nucleophile is the S161. Residues 162-170 (NGRSDPTSR) lie on the Extracellular side of the membrane. Residues R164 and S169 each contribute to the Ca(2+) site. Residues 171 to 183 (SWNRLYARLMAQN) form a beta stranded membrane-spanning segment. Over 184-185 (GN) the chain is Periplasmic. A beta stranded membrane pass occupies residues 186–195 (WLVEVKPWYV). The Extracellular portion of the chain corresponds to 196 to 213 (VGSTDDNPDITKYMGYYR). D201 is a Ca(2+) binding site. Residues 214–220 (LKVGYQL) traverse the membrane as a beta stranded segment. The Periplasmic portion of the chain corresponds to 221–222 (GE). Residues 223–231 (AILSAQGQY) traverse the membrane as a beta stranded segment. The Extracellular segment spans residues 232–238 (NWNTGYG). A beta stranded transmembrane segment spans residues 239-247 (GAELGVSYP). Over 248-252 (ITKHV) the chain is Periplasmic. Residues 253-262 (RAYTQIYSGY) form a beta stranded membrane-spanning segment. At 263–271 (GESLIDYNF) the chain is on the extracellular side. The chain crosses the membrane as a beta stranded span at residues 272 to 283 (NQTRVGVGLMLN). The Periplasmic segment spans residues 284–286 (DLF).

The protein belongs to the phospholipase A1 family. As to quaternary structure, homodimer; dimerization is reversible, and the dimeric form is the active one. It depends on Ca(2+) as a cofactor.

The protein resides in the cell outer membrane. The enzyme catalyses a 1,2-diacyl-sn-glycero-3-phosphocholine + H2O = a 2-acyl-sn-glycero-3-phosphocholine + a fatty acid + H(+). It carries out the reaction a 1,2-diacyl-sn-glycero-3-phosphocholine + H2O = a 1-acyl-sn-glycero-3-phosphocholine + a fatty acid + H(+). Its function is as follows. Hydrolysis of phosphatidylcholine with phospholipase A2 (EC 3.1.1.4) and phospholipase A1 (EC 3.1.1.32) activities. This Klebsiella pneumoniae protein is Phospholipase A1 (pldA).